We begin with the raw amino-acid sequence, 668 residues long: UvrABC system protein B (668 aa).

In terms of domain architecture, Helicase ATP-binding spans 31–416; the sequence is QGITDGVPAQ…RGHIIEQIIR (386 aa). 44–51 is an ATP binding site; the sequence is GTTGSGKT. The Beta-hairpin signature appears at 97–120; sequence YYDYYQPEAYIARSDTYIEKSLLI. Residues 433-596 form the Helicase C-terminal domain; sequence QIDDLLEEIR…ITPQPIIKPI (164 aa). Residues 621–656 form the UVR domain; sequence EASIKTYEEAMYQAAQEFQFDEAAKYRDLMNAAKKQ.

It belongs to the UvrB family. Forms a heterotetramer with UvrA during the search for lesions. Interacts with UvrC in an incision complex.

It is found in the cytoplasm. The UvrABC repair system catalyzes the recognition and processing of DNA lesions. A damage recognition complex composed of 2 UvrA and 2 UvrB subunits scans DNA for abnormalities. Upon binding of the UvrA(2)B(2) complex to a putative damaged site, the DNA wraps around one UvrB monomer. DNA wrap is dependent on ATP binding by UvrB and probably causes local melting of the DNA helix, facilitating insertion of UvrB beta-hairpin between the DNA strands. Then UvrB probes one DNA strand for the presence of a lesion. If a lesion is found the UvrA subunits dissociate and the UvrB-DNA preincision complex is formed. This complex is subsequently bound by UvrC and the second UvrB is released. If no lesion is found, the DNA wraps around the other UvrB subunit that will check the other stand for damage. The polypeptide is UvrABC system protein B (Chlamydia trachomatis serovar D (strain ATCC VR-885 / DSM 19411 / UW-3/Cx)).